Here is a 131-residue protein sequence, read N- to C-terminus: SPbeta prophage-derived UPF0715 membrane protein YopD (131 aa).

4 helical membrane passes run 12 to 32, 38 to 58, 75 to 95, and 108 to 128; these read VYTLAFSSLSFGLIFGLYLFV, AIALVTIAIIAFYALITYLVF, LINFLIYIAVAFSAVFLFWFV, and FEYYIMSIVAAFIYWFWDSIF.

The protein belongs to the UPF0715 family.

The protein resides in the cell membrane. This Bacillus subtilis (strain 168) protein is SPbeta prophage-derived UPF0715 membrane protein YopD (yopD).